Reading from the N-terminus, the 250-residue chain is Probable transcriptional regulatory protein Lferr_0060 (250 aa).

It belongs to the TACO1 family.

It is found in the cytoplasm. This Acidithiobacillus ferrooxidans (strain ATCC 53993 / BNL-5-31) (Leptospirillum ferrooxidans (ATCC 53993)) protein is Probable transcriptional regulatory protein Lferr_0060.